A 211-amino-acid polypeptide reads, in one-letter code: FMN-dependent NADH:quinone oxidoreductase (211 aa).

FMN-binding positions include 17 to 19 (SNS), 102 to 105 (MWNL), and 146 to 149 (SRGG).

This sequence belongs to the azoreductase type 1 family. As to quaternary structure, homodimer. FMN serves as cofactor.

It catalyses the reaction 2 a quinone + NADH + H(+) = 2 a 1,4-benzosemiquinone + NAD(+). It carries out the reaction N,N-dimethyl-1,4-phenylenediamine + anthranilate + 2 NAD(+) = 2-(4-dimethylaminophenyl)diazenylbenzoate + 2 NADH + 2 H(+). Quinone reductase that provides resistance to thiol-specific stress caused by electrophilic quinones. Its function is as follows. Also exhibits azoreductase activity. Catalyzes the reductive cleavage of the azo bond in aromatic azo compounds to the corresponding amines. The protein is FMN-dependent NADH:quinone oxidoreductase of Macrococcus caseolyticus (strain JCSC5402) (Macrococcoides caseolyticum).